The primary structure comprises 209 residues: MLHATQLCYLLLFCFLPISISSAVLIEREINVPTTHVLQTLYTRFWSFKAHLGVDMELGIKGSLIHYRDDKLFLGEYPKSRLLRVCYDDNGTFKVKDKRGLVYVQGERLILERDAPSKFSIELVEERREPESPYLLFFSNSSRFSACEESGEWVIYSGDVYSAETTCIPIELVGLRYRGWKTNDKKPFRIIEPGKEPLDAPWNDELIVM.

Residues 1–22 (MLHATQLCYLLLFCFLPISISS) form the signal peptide.

The protein localises to the secreted. In Schizosaccharomyces pombe (strain 972 / ATCC 24843) (Fission yeast), this protein is Mei4-dependent protein 1 (mde1).